A 517-amino-acid polypeptide reads, in one-letter code: Acyltransferase AFT15-1 (517 aa).

His-180 functions as the Proton acceptor in the catalytic mechanism.

Belongs to the plant acyltransferase family.

Its pathway is mycotoxin biosynthesis. Its function is as follows. Acyltransferase; part of the gene clusters that mediate the biosynthesis of the host-selective toxins (HSTs) AF-toxins responsible for Alternaria black spot of strawberry disease by the strawberry pathotype. AF-toxin I and III are valine derivatives of 2,3-dyhydroxy-isovaleric acid and 2-hydroxy-isovaleric acid respectively, while AF II is an isoleucine derivative of 2-hydroxy-valeric acid. These derivatives are bound to a 9,10-epoxy-8-hydroxy-9-methyl-decatrienoic acid (EDA) moiety. On cellular level, AF-toxins affect plasma membrane of susceptible cells and cause a sudden increase in loss of K(+) after a few minutes of toxin treatment. The aldo-keto reductase AFTS1 catalyzes the conversion of 2-keto-isovaleric acid (2-KIV) to 2-hydroxy-isovaleric acid (2-HIV) by reduction of its ketone to an alcohol. The acyl-CoA ligase AFT1, the hydrolase AFT2 and the enoyl-CoA hydratases AFT3 and AFT6, but also the polyketide synthase AFT9, the acyl-CoA dehydrogenase AFT10, the cytochrome P450 monooxygenase AFT11 and the oxidoreductase AFT12 are all involved in the biosynthesis of the AK-, AF- and ACT-toxin common EDA structural moiety. The exact function of each enzyme, and of additional enzymes identified within the AF-toxin clusters have still to be determined. In Alternaria alternata (Alternaria rot fungus), this protein is Acyltransferase AFT15-1 (AFT15-1).